A 1177-amino-acid chain; its full sequence is Transcription-repair-coupling factor (1177 aa).

Positions 638 to 799 (DMERERPMDR…MLGVRDLSVI (162 aa)) constitute a Helicase ATP-binding domain. Residue 651–658 (GDVGYGKT) participates in ATP binding. The DEEQ box signature appears at 752-755 (DEEQ). Residues 820 to 974 (LVREAIEREL…GFKIAMRDLT (155 aa)) enclose the Helicase C-terminal domain.

In the N-terminal section; belongs to the UvrB family. This sequence in the C-terminal section; belongs to the helicase family. RecG subfamily.

The protein localises to the cytoplasm. Its function is as follows. Couples transcription and DNA repair by recognizing RNA polymerase (RNAP) stalled at DNA lesions. Mediates ATP-dependent release of RNAP and its truncated transcript from the DNA, and recruitment of nucleotide excision repair machinery to the damaged site. Probably required to repair non-bulky DNA lesions. This is Transcription-repair-coupling factor from Bacillus subtilis (strain 168).